The sequence spans 397 residues: 1-deoxy-D-xylulose 5-phosphate reductoisomerase (397 aa).

Residues Thr17, Gly18, Ser19, Ile20, Ala45, Asn47, and Asn130 each contribute to the NADPH site. Position 131 (Lys131) interacts with 1-deoxy-D-xylulose 5-phosphate. Glu132 contacts NADPH. Asp156 serves as a coordination point for Mn(2+). Positions 157, 158, 182, and 205 each coordinate 1-deoxy-D-xylulose 5-phosphate. Position 158 (Glu158) interacts with Mn(2+). Gly211 provides a ligand contact to NADPH. 4 residues coordinate 1-deoxy-D-xylulose 5-phosphate: Ser218, Asn223, Lys224, and Glu227. Glu227 contributes to the Mn(2+) binding site.

This sequence belongs to the DXR family. The cofactor is Mg(2+). Mn(2+) is required as a cofactor.

It carries out the reaction 2-C-methyl-D-erythritol 4-phosphate + NADP(+) = 1-deoxy-D-xylulose 5-phosphate + NADPH + H(+). The protein operates within isoprenoid biosynthesis; isopentenyl diphosphate biosynthesis via DXP pathway; isopentenyl diphosphate from 1-deoxy-D-xylulose 5-phosphate: step 1/6. Its function is as follows. Catalyzes the NADPH-dependent rearrangement and reduction of 1-deoxy-D-xylulose-5-phosphate (DXP) to 2-C-methyl-D-erythritol 4-phosphate (MEP). The polypeptide is 1-deoxy-D-xylulose 5-phosphate reductoisomerase (Agrobacterium fabrum (strain C58 / ATCC 33970) (Agrobacterium tumefaciens (strain C58))).